The chain runs to 657 residues: Glycogen debranching enzyme (657 aa).

The active-site Nucleophile is Asp336. Glu371 functions as the Proton donor in the catalytic mechanism. The disordered stretch occupies residues 460-479; the sequence is ANGEENRDGTNNNYSNNHGK.

This sequence belongs to the glycosyl hydrolase 13 family.

The catalysed reaction is Hydrolysis of (1-&gt;6)-alpha-D-glucosidic linkages to branches with degrees of polymerization of three or four glucose residues in limit dextrin.. It participates in glycan degradation; glycogen degradation. Removes maltotriose and maltotetraose chains that are attached by 1,6-alpha-linkage to the limit dextrin main chain, generating a debranched limit dextrin. In Escherichia coli O9:H4 (strain HS), this protein is Glycogen debranching enzyme.